The following is a 410-amino-acid chain: Threonylcarbamoyladenosine tRNA methylthiotransferase MtaB (410 aa).

The MTTase N-terminal domain occupies 1–113 (MKVAFETLGC…LLKILEEYLE (113 aa)). [4Fe-4S] cluster contacts are provided by Cys-10, Cys-46, Cys-77, Cys-152, Cys-156, and Cys-159. The region spanning 138-366 (YFEGVRPFLK…KELDQKKRQE (229 aa)) is the Radical SAM core domain.

The protein belongs to the methylthiotransferase family. MtaB subfamily. [4Fe-4S] cluster serves as cofactor.

The protein localises to the cytoplasm. It carries out the reaction N(6)-L-threonylcarbamoyladenosine(37) in tRNA + (sulfur carrier)-SH + AH2 + 2 S-adenosyl-L-methionine = 2-methylsulfanyl-N(6)-L-threonylcarbamoyladenosine(37) in tRNA + (sulfur carrier)-H + 5'-deoxyadenosine + L-methionine + A + S-adenosyl-L-homocysteine + 2 H(+). In terms of biological role, catalyzes the methylthiolation of N6-threonylcarbamoyladenosine (t(6)A), leading to the formation of 2-methylthio-N6-threonylcarbamoyladenosine (ms(2)t(6)A) at position 37 in tRNAs that read codons beginning with adenine. This chain is Threonylcarbamoyladenosine tRNA methylthiotransferase MtaB (mtaB), found in Aquifex aeolicus (strain VF5).